The sequence spans 337 residues: Leucine-rich repeat-containing protein 39 (337 aa).

LRR repeat units follow at residues Gln-84–Phe-105, His-107–Leu-128, Arg-130–Thr-152, Ser-153–Leu-176, Lys-177–Met-198, Ala-200–Met-221, Ser-223–Met-244, Asn-246–Met-267, and Asn-269–Asp-290.

In terms of assembly, interacts with MYH7 (via C-terminus). In terms of tissue distribution, expressed in heart and skeletal muscle.

The protein resides in the cytoplasm. It localises to the myofibril. The protein localises to the sarcomere. It is found in the m line. Functionally, component of the sarcomeric M-band which plays a role in myocyte response to biomechanical stress. May regulate expression of other M-band proteins via an SRF-dependent pathway. Important for normal contractile function in heart. The sequence is that of Leucine-rich repeat-containing protein 39 from Mus musculus (Mouse).